The following is a 241-amino-acid chain: Small ribosomal subunit protein uS2 (241 aa).

Belongs to the universal ribosomal protein uS2 family.

The polypeptide is Small ribosomal subunit protein uS2 (Escherichia coli O127:H6 (strain E2348/69 / EPEC)).